Here is a 1042-residue protein sequence, read N- to C-terminus: MISYFLNQDFSRKKQGRMAASGPKSSGPRGFGRRTTVGSAQKRTQKKNGEKDSNATSTATNEVSGISKLPAAKVDVQKQSSVVLNERNVLDRSDIEDGSDRLDKKTTDDDDLLEQKLKLERENLRRKEIETLAAENLARGDRMFVYPVIVKPDEDIEVFLNRNLSTLNNEPDVLIMGAFNEWRWKSFTRRLEKTWIHEDWLSCLLHIPKEAYKMDFVFFNGQSVYDNNDSKDFCVEIKGGMDKVDFENFLLEEKLREQEKLAKEEAERERQKEEKRRIEAQKAAIEADRAQAKAETQKRRELLQPAIKKAVVSAENVWYIEPSDFKAEDTVKLYYNKRSGPLTNSKELWLHGGFNNWVDGLSIVVKLVNAELKDVDPKSGNWWFAEVVVPGGALVIDWVFADGPPKGAFLYDNNGYQDFHALVPQKLPEELYWLEEENMIFRKLQEDRRLKEEVMRAKMEKTARLKAETKERTLKKFLLSQKDVVYTEPLEIQAGNPVTVLYNPANTVLNGKPEVWFRGSFNRWTHRLGPLPPQKMEATDDESSHVKTTAKVPLDAYMMDFVFSEKEDGGIFDNKNGLDYHLPVVGGISKEPPLHIVHIAVEMAPIAKVGGLGDVVTSLSRAVQELNHNVDIVFPKYDCIKHNFVKDLQFNRSYHWGGTEIKVWHGKVEGLSVYFLDPQNGLFQRGCVYGCADDAGRFGFFCHAALEFLLQGGFHPDILHCHDWSSAPVSWLFKDHYTQYGLIKTRIVFTIHNLEFGANAIGKAMTFADKATTVSPTYAKEVAGNSVISAHLYKFHGIINGIDPDIWDPYNDNFIPVPYTSENVVEGKRAAKEELQNRLGLKSADFPVVGIITRLTHQKGIHLIKHAIWRTLERNGQVVLLGSAPDPRIQNDFVNLANQLHSSHGDRARLVLTYDEPLSHLIYAGADFILVPSIFEPCGLTQLIAMRYGAVPVVRKTGGLFDTVFDVDHDKERAQAQVLEPNGFSFDGADAPGVDYALNRAISAWYDGREWFNSLCKTVMEQDWSWNRPALEYLELYHSARK.

A chloroplast-targeting transit peptide spans 1–44; the sequence is MISYFLNQDFSRKKQGRMAASGPKSSGPRGFGRRTTVGSAQKRT. Residues 1-63 are disordered; sequence MISYFLNQDF…NATSTATNEV (63 aa). A compositionally biased stretch (polar residues) spans 54 to 63; the sequence is NATSTATNEV. Positions 247 to 302 form a coiled coil; sequence ENFLLEEKLREQEKLAKEEAERERQKEEKRRIEAQKAAIEADRAQAKAETQKRREL. Lys-608 serves as a coordination point for ADP-alpha-D-glucose.

It belongs to the glycosyltransferase 1 family. Bacterial/plant glycogen synthase subfamily. As to expression, expressed in leaves and flowers.

Its subcellular location is the plastid. It localises to the chloroplast. The protein localises to the amyloplast. It catalyses the reaction [(1-&gt;4)-alpha-D-glucosyl](n) + ADP-alpha-D-glucose = [(1-&gt;4)-alpha-D-glucosyl](n+1) + ADP + H(+). Its pathway is glycan biosynthesis; starch biosynthesis. Functionally, involved in the synthesis of glycan chains within amylopectin in leaves. May play a regulatory role in the control of starch accumulation in plastids. The protein is Starch synthase 3, chloroplastic/amyloplastic (SS3) of Arabidopsis thaliana (Mouse-ear cress).